Here is a 359-residue protein sequence, read N- to C-terminus: MVNLPRDRMDQVVKRFEMLEAQMSAGPAPDAYVKMASEYAELQDMVAKVRQLRSAEHEQADLEAMLADKGTDAEMRALAEADLPDVEERIEALQKDIQILLLPKDAADDKNAILEIRAGTGGDEAALFAGDLFRMYERYAAERGWRFETVSASDGDAGGFKEIIATVSGKGVFAHLKFESGVHRVQRVPATEASGRIHTSAATVAVLPEAEEVDIEIRAEDIRIDTMRASGSGGQHVNTTDSAVRITHLPTGIMVVQAEKSQHQNRAKAMQILRARLYDLERSKADEERSESRKSQVGSGDRSERIRTYNFPQGRVTDHRINLTLYKLDRVMMGELDEIVDALIADHQSKLLADIGLDG.

N5-methylglutamine is present on glutamine 235. Over residues 283–294 (SKADEERSESRK) the composition is skewed to basic and acidic residues. The segment at 283–309 (SKADEERSESRKSQVGSGDRSERIRTY) is disordered.

It belongs to the prokaryotic/mitochondrial release factor family. In terms of processing, methylated by PrmC. Methylation increases the termination efficiency of RF1.

The protein resides in the cytoplasm. Peptide chain release factor 1 directs the termination of translation in response to the peptide chain termination codons UAG and UAA. This chain is Peptide chain release factor 1, found in Mesorhizobium japonicum (strain LMG 29417 / CECT 9101 / MAFF 303099) (Mesorhizobium loti (strain MAFF 303099)).